The primary structure comprises 164 residues: Peptidyl-prolyl cis-trans isomerase A (164 aa).

The residue at position 1 (methionine 1) is an N-acetylmethionine. Residue valine 2 is modified to N-acetylvaline; in Peptidyl-prolyl cis-trans isomerase A, N-terminally processed. The 157-residue stretch at 7–163 folds into the PPIase cyclophilin-type domain; the sequence is FFDIAVDGEP…KKITIADCGQ (157 aa). Position 28 is an N6-acetyllysine; alternate (lysine 28). Lysine 28 is covalently cross-linked (Glycyl lysine isopeptide (Lys-Gly) (interchain with G-Cter in SUMO2); alternate). Lysine 28 participates in a covalent cross-link: Glycyl lysine isopeptide (Lys-Gly) (interchain with G-Cter in ubiquitin); alternate. Lysine 44 and lysine 76 each carry N6-acetyllysine. Residue serine 77 is modified to Phosphoserine. The residue at position 82 (lysine 82) is an N6-acetyllysine; alternate. Residue lysine 82 forms a Glycyl lysine isopeptide (Lys-Gly) (interchain with G-Cter in SUMO2); alternate linkage. Threonine 93 is subject to Phosphothreonine. Residue asparagine 108 is glycosylated (N-linked (GlcNAc...) asparagine). N6-acetyllysine is present on residues lysine 125, lysine 131, and lysine 133.

Belongs to the cyclophilin-type PPIase family. PPIase A subfamily. In terms of assembly, interacts with protein phosphatase PPP3CA/calcineurin A. Interacts with isoform 2 of BSG/CD147. Interacts with FOXO1; the interaction promotes FOXO1 dephosphorylation, nuclear accumulation and transcriptional activity. Interacts with integrin ITGA2B:ITGB3; the interaction is ROS and peptidyl-prolyl cis-trans isomerase (PPIase) activity-dependent and is increased in the presence of thrombin. Interacts with MAP3K5. Interacts with TARDBP; the interaction is dependent on the RNA-binding activity of TARDBP and the PPIase activity of PPIA/CYPA and the acetylation of PPIA/CYPA at Lys-125 favors the interaction. Interacts with HNRNPA1, HNRNPA2B1, HNRNPC, RBMX, HNRNPK and HNRNPM. In terms of processing, acetylation at Lys-125 markedly inhibits catalysis of cis to trans isomerization. PPIA acetylation also antagonizes the immunosuppressive effects of cyclosporine by inhibiting the sequential steps of cyclosporine binding and calcineurin inhibition. Acetylation at Lys-125 favors the interaction with TARDBP.

The protein resides in the cytoplasm. Its subcellular location is the secreted. It localises to the nucleus. The catalysed reaction is [protein]-peptidylproline (omega=180) = [protein]-peptidylproline (omega=0). Its activity is regulated as follows. Binds cyclosporin A (CsA). CsA mediates some of its effects via an inhibitory action on PPIase. Functionally, catalyzes the cis-trans isomerization of proline imidic peptide bonds in oligopeptides. Exerts a strong chemotactic effect on leukocytes partly through activation of one of its membrane receptors BSG/CD147, initiating a signaling cascade that culminates in MAPK/ERK activation. Activates endothelial cells (ECs) in a proinflammatory manner by stimulating activation of NF-kappa-B and ERK, JNK and p38 MAP-kinases and by inducing expression of adhesion molecules including SELE and VCAM1. Induces apoptosis in ECs by promoting the FOXO1-dependent expression of CCL2 and BCL2L11 which are involved in EC chemotaxis and apoptosis. In response to oxidative stress, initiates proapoptotic and antiapoptotic signaling in ECs via activation of NF-kappa-B and AKT1 and up-regulation of antiapoptotic protein BCL2. Negatively regulates MAP3K5/ASK1 kinase activity, autophosphorylation and oxidative stress-induced apoptosis mediated by MAP3K5/ASK1. Necessary for the assembly of TARDBP in heterogeneous nuclear ribonucleoprotein (hnRNP) complexes and regulates TARDBP binding to RNA UG repeats and TARDBP-dependent expression of HDAC6, ATG7 and VCP which are involved in clearance of protein aggregates. Plays an important role in platelet activation and aggregation. Regulates calcium mobilization and integrin ITGA2B:ITGB3 bidirectional signaling via increased ROS production as well as by facilitating the interaction between integrin and the cell cytoskeleton. Binds heparan sulfate glycosaminoglycans. The sequence is that of Peptidyl-prolyl cis-trans isomerase A (PPIA) from Saguinus oedipus (Cotton-top tamarin).